The sequence spans 374 residues: Alcohol dehydrogenase class-3 (374 aa).

Ser-2 carries the post-translational modification N-acetylserine. 7 residues coordinate Zn(2+): Cys-45, His-67, Cys-97, Cys-100, Cys-103, Cys-111, and Cys-174. Lys-233 is subject to N6-succinyllysine. Ser-247 is subject to Phosphoserine. The residue at position 315 (Lys-315) is an N6-succinyllysine. Residues Ser-324 and Ser-351 each carry the phosphoserine modification.

It belongs to the zinc-containing alcohol dehydrogenase family. Class-III subfamily. In terms of assembly, homodimer. Zn(2+) is required as a cofactor.

The protein resides in the cytoplasm. The catalysed reaction is a primary alcohol + NAD(+) = an aldehyde + NADH + H(+). The enzyme catalyses a secondary alcohol + NAD(+) = a ketone + NADH + H(+). It catalyses the reaction S-(hydroxymethyl)glutathione + NADP(+) = S-formylglutathione + NADPH + H(+). It carries out the reaction S-(hydroxymethyl)glutathione + NAD(+) = S-formylglutathione + NADH + H(+). The catalysed reaction is 20-oxo-(5Z,8Z,11Z,14Z)-eicosatetraenoate + NAD(+) + H2O = (5Z,8Z,11Z,14Z)-eicosatetraenedioate + NADH + 2 H(+). The enzyme catalyses 20-hydroxy-(5Z,8Z,11Z,14Z)-eicosatetraenoate + NAD(+) = 20-oxo-(5Z,8Z,11Z,14Z)-eicosatetraenoate + NADH + H(+). It catalyses the reaction S-nitrosoglutathione + NADH + H(+) = S-(hydroxysulfenamide)glutathione + NAD(+). In terms of biological role, catalyzes the oxidation of long-chain primary alcohols and the oxidation of S-(hydroxymethyl) glutathione. Also oxidizes long chain omega-hydroxy fatty acids, such as 20-HETE, producing both the intermediate aldehyde, 20-oxoarachidonate and the end product, a dicarboxylic acid, (5Z,8Z,11Z,14Z)-eicosatetraenedioate. Class-III ADH is remarkably ineffective in oxidizing ethanol. Required for clearance of cellular formaldehyde, a cytotoxic and carcinogenic metabolite that induces DNA damage. Also acts as a S-nitroso-glutathione reductase by catalyzing the NADH-dependent reduction of S-nitrosoglutathione, thereby regulating protein S-nitrosylation. This chain is Alcohol dehydrogenase class-3, found in Equus caballus (Horse).